A 265-amino-acid polypeptide reads, in one-letter code: Hydroxyethylthiazole kinase (265 aa).

Met-36 lines the substrate pocket. Residues Lys-112 and Ser-160 each contribute to the ATP site. Substrate is bound at residue Gly-187.

This sequence belongs to the Thz kinase family. Requires Mg(2+) as cofactor.

It carries out the reaction 5-(2-hydroxyethyl)-4-methylthiazole + ATP = 4-methyl-5-(2-phosphooxyethyl)-thiazole + ADP + H(+). Its pathway is cofactor biosynthesis; thiamine diphosphate biosynthesis; 4-methyl-5-(2-phosphoethyl)-thiazole from 5-(2-hydroxyethyl)-4-methylthiazole: step 1/1. Its function is as follows. Catalyzes the phosphorylation of the hydroxyl group of 4-methyl-5-beta-hydroxyethylthiazole (THZ). The chain is Hydroxyethylthiazole kinase from Clostridium perfringens (strain SM101 / Type A).